Consider the following 203-residue polypeptide: Corrinoid adenosyltransferase (203 aa).

The interval 1–21 (MNESPEKDQRHRERMERKKAV) is disordered. 41–47 (GNGKGKS) contacts ATP.

Belongs to the Cob(I)alamin adenosyltransferase family. Monomer. Mn(2+) serves as cofactor.

Its subcellular location is the cytoplasm. It carries out the reaction 2 cob(II)yrinate a,c diamide + reduced [electron-transfer flavoprotein] + 2 ATP = 2 adenosylcob(III)yrinate a,c-diamide + 2 triphosphate + oxidized [electron-transfer flavoprotein] + 3 H(+). The catalysed reaction is 2 cob(II)alamin + reduced [electron-transfer flavoprotein] + 2 ATP = 2 adenosylcob(III)alamin + 2 triphosphate + oxidized [electron-transfer flavoprotein] + 3 H(+). It functions in the pathway cofactor biosynthesis; adenosylcobalamin biosynthesis; adenosylcobalamin from cob(II)yrinate a,c-diamide: step 2/7. Functionally, required for both de novo synthesis of the corrin ring for the assimilation of exogenous corrinoids. Participates in the adenosylation of a variety of incomplete and complete corrinoids. This is Corrinoid adenosyltransferase (cobO) from Pseudomonas aeruginosa (strain ATCC 15692 / DSM 22644 / CIP 104116 / JCM 14847 / LMG 12228 / 1C / PRS 101 / PAO1).